The sequence spans 414 residues: Collagenase (414 aa).

This sequence belongs to the peptidase U32 family. As to quaternary structure, homodimer. A metal cation serves as cofactor.

Functionally, has collagenase activity. Hydrolyzes type I collagen. May play a role in virulence. The chain is Collagenase (prtC) from Porphyromonas gingivalis (strain ATCC BAA-308 / W83).